Reading from the N-terminus, the 167-residue chain is NAD(P)H-quinone oxidoreductase subunit J (167 aa).

The protein belongs to the complex I 30 kDa subunit family. In terms of assembly, NDH-1 can be composed of about 15 different subunits; different subcomplexes with different compositions have been identified which probably have different functions.

It localises to the cellular thylakoid membrane. The enzyme catalyses a plastoquinone + NADH + (n+1) H(+)(in) = a plastoquinol + NAD(+) + n H(+)(out). The catalysed reaction is a plastoquinone + NADPH + (n+1) H(+)(in) = a plastoquinol + NADP(+) + n H(+)(out). Functionally, NDH-1 shuttles electrons from an unknown electron donor, via FMN and iron-sulfur (Fe-S) centers, to quinones in the respiratory and/or the photosynthetic chain. The immediate electron acceptor for the enzyme in this species is believed to be plastoquinone. Couples the redox reaction to proton translocation, and thus conserves the redox energy in a proton gradient. Cyanobacterial NDH-1 also plays a role in inorganic carbon-concentration. The chain is NAD(P)H-quinone oxidoreductase subunit J from Microcystis aeruginosa (strain NIES-843 / IAM M-2473).